The following is a 1153-amino-acid chain: ATP-dependent helicase/deoxyribonuclease subunit B (1153 aa).

Positions 1–289 (MELNAYIGRA…KHLEQNFNAL (289 aa)) constitute a UvrD-like helicase ATP-binding domain. Residue 8–15 (GRAGTGKS) participates in ATP binding. The UvrD-like helicase C-terminal domain maps to 269–583 (LDVQRFIHND…SIGTMDLAKV (315 aa)). [4Fe-4S] cluster contacts are provided by C784, C1110, C1113, and C1119.

Belongs to the helicase family. AddB/RexB type 1 subfamily. Heterodimer of AddA and AddB. Mg(2+) is required as a cofactor. It depends on [4Fe-4S] cluster as a cofactor.

The heterodimer acts as both an ATP-dependent DNA helicase and an ATP-dependent, dual-direction single-stranded exonuclease. Recognizes the chi site generating a DNA molecule suitable for the initiation of homologous recombination. The AddB subunit has 5' -&gt; 3' nuclease activity but not helicase activity. This is ATP-dependent helicase/deoxyribonuclease subunit B from Staphylococcus saprophyticus subsp. saprophyticus (strain ATCC 15305 / DSM 20229 / NCIMB 8711 / NCTC 7292 / S-41).